We begin with the raw amino-acid sequence, 646 residues long: Centrosomal protein of 72 kDa (646 aa).

LRR repeat units follow at residues 28 to 49, 54 to 75, and 76 to 97; these read ELRSLSIPGTYQEKITHLGNSL, ALKSLDLSRNSLVSLEGIQYLV, and SLESLNLYYNCISSLAEVFRLH. An LRRCT domain is found at 110–149; that stretch reads NPVVKNESDYRLFVVHMLPKLRQLDDRPVRESERKASQLH. 2 positions are modified to phosphoserine: S117 and S236. Disordered regions lie at residues 300-342 and 357-399; these read SVDV…RFQV and GPSS…SDPR. The segment covering 307 to 319 has biased composition (low complexity); the sequence is ASSAQKSSLSSQK. S380 carries the phosphoserine modification. Positions 383–392 are enriched in basic and acidic residues; that stretch reads EALEAEERTS. S402 is subject to Phosphoserine. The stretch at 476–622 forms a coiled coil; that stretch reads LSLENKTLQS…RAEVEQMRWS (147 aa).

It belongs to the CEP72 family. In terms of assembly, interacts with KIZ, PCM1 and CDK5RAP2.

Its subcellular location is the cytoplasm. It is found in the cytoskeleton. The protein localises to the microtubule organizing center. The protein resides in the centrosome. It localises to the centriolar satellite. Involved in the recruitment of key centrosomal proteins to the centrosome. Provides centrosomal microtubule-nucleation activity on the gamma-tubulin ring complexes (gamma-TuRCs) and has critical roles in forming a focused bipolar spindle, which is needed for proper tension generation between sister chromatids. Required for localization of KIZ, AKAP9 and gamma-tubulin ring complexes (gamma-TuRCs). Involved in centriole duplication. Required for CDK5RAP22, CEP152, WDR62 and CEP63 centrosomal localization and promotes the centrosomal localization of CDK2. This is Centrosomal protein of 72 kDa (Cep72) from Mus musculus (Mouse).